A 514-amino-acid chain; its full sequence is Ribonuclease Y (514 aa).

A helical transmembrane segment spans residues 3–23 (YMIIYEIIAGILIVVAILIHF). Positions 204-289 (TVHVVTLPND…EMVEKAEKEL (86 aa)) constitute a KH domain. In terms of domain architecture, HD spans 330–423 (VLKHSVEVAY…VQAADAISAA (94 aa)).

This sequence belongs to the RNase Y family.

It is found in the cell membrane. Endoribonuclease that initiates mRNA decay. This chain is Ribonuclease Y, found in Clostridium kluyveri (strain ATCC 8527 / DSM 555 / NBRC 12016 / NCIMB 10680 / K1).